Here is a 305-residue protein sequence, read N- to C-terminus: Thioredoxin reductase (305 aa).

Position 28-35 (28-35 (LGIETSSQ)) interacts with FAD. Residues Cys-129 and Cys-132 are joined by a disulfide bond. FAD is bound at residue 272–281 (DCCDWIYRQA).

It belongs to the class-II pyridine nucleotide-disulfide oxidoreductase family. In terms of assembly, homodimer. Requires FAD as cofactor.

Its subcellular location is the cytoplasm. The enzyme catalyses [thioredoxin]-dithiol + NADP(+) = [thioredoxin]-disulfide + NADPH + H(+). The sequence is that of Thioredoxin reductase (TRXB) from Spironucleus barkhanus.